A 151-amino-acid polypeptide reads, in one-letter code: Deoxyuridine 5'-triphosphate nucleotidohydrolase (151 aa).

Substrate contacts are provided by residues 70–72, Asn-83, 87–89, and Met-97; these read RSG and LID.

Belongs to the dUTPase family. The cofactor is Mg(2+).

The enzyme catalyses dUTP + H2O = dUMP + diphosphate + H(+). It participates in pyrimidine metabolism; dUMP biosynthesis; dUMP from dCTP (dUTP route): step 2/2. In terms of biological role, this enzyme is involved in nucleotide metabolism: it produces dUMP, the immediate precursor of thymidine nucleotides and it decreases the intracellular concentration of dUTP so that uracil cannot be incorporated into DNA. This Haemophilus influenzae (strain 86-028NP) protein is Deoxyuridine 5'-triphosphate nucleotidohydrolase.